The chain runs to 151 residues: Pollen allergen Sal k 5.0101 (151 aa).

3 disulfide bridges follow: Cys-17–Cys-88, Cys-20–Cys-132, and Cys-41–Cys-76. A glycan (N-linked (GlcNAc...) asparagine) is linked at Asn-43.

The protein belongs to the Ole e I family. Post-translationally, N-glycosylated. Contains fucose monosaccharides in the glycan structure. As to expression, expressed in pollen (at protein level).

Its subcellular location is the secreted. This is Pollen allergen Sal k 5.0101 from Kali turgidum (Prickly saltwort).